A 324-amino-acid polypeptide reads, in one-letter code: Beta-ketoacyl-[acyl-carrier-protein] synthase III (324 aa).

Residues C112 and H249 contribute to the active site. Positions Q250–R254 are ACP-binding. The active site involves N279.

The protein belongs to the thiolase-like superfamily. FabH family. In terms of assembly, homodimer.

It is found in the cytoplasm. The enzyme catalyses malonyl-[ACP] + acetyl-CoA + H(+) = 3-oxobutanoyl-[ACP] + CO2 + CoA. Its pathway is lipid metabolism; fatty acid biosynthesis. Functionally, catalyzes the condensation reaction of fatty acid synthesis by the addition to an acyl acceptor of two carbons from malonyl-ACP. Catalyzes the first condensation reaction which initiates fatty acid synthesis and may therefore play a role in governing the total rate of fatty acid production. Possesses both acetoacetyl-ACP synthase and acetyl transacylase activities. Its substrate specificity determines the biosynthesis of branched-chain and/or straight-chain of fatty acids. The protein is Beta-ketoacyl-[acyl-carrier-protein] synthase III of Streptococcus pneumoniae serotype 2 (strain D39 / NCTC 7466).